The sequence spans 260 residues: GTP cyclohydrolase FolE2 (260 aa).

Belongs to the GTP cyclohydrolase IV family.

It catalyses the reaction GTP + H2O = 7,8-dihydroneopterin 3'-triphosphate + formate + H(+). Its pathway is cofactor biosynthesis; 7,8-dihydroneopterin triphosphate biosynthesis; 7,8-dihydroneopterin triphosphate from GTP: step 1/1. In terms of biological role, converts GTP to 7,8-dihydroneopterin triphosphate. This Desulfovibrio desulfuricans (strain ATCC 27774 / DSM 6949 / MB) protein is GTP cyclohydrolase FolE2.